A 497-amino-acid polypeptide reads, in one-letter code: uncharacterized protein (497 aa).

266 to 273 (GIQGTGKS) is an ATP binding site.

The protein belongs to the AAA ATPase family. Highly divergent.

It is found in the plastid. The protein resides in the chloroplast. This is an uncharacterized protein from Trieres chinensis (Marine centric diatom).